Reading from the N-terminus, the 225-residue chain is Uracil-DNA glycosylase (225 aa).

Aspartate 65 acts as the Proton acceptor in catalysis.

Belongs to the uracil-DNA glycosylase (UDG) superfamily. UNG family.

The protein resides in the cytoplasm. The enzyme catalyses Hydrolyzes single-stranded DNA or mismatched double-stranded DNA and polynucleotides, releasing free uracil.. Its function is as follows. Excises uracil residues from the DNA which can arise as a result of misincorporation of dUMP residues by DNA polymerase or due to deamination of cytosine. The protein is Uracil-DNA glycosylase of Bacillus mycoides (strain KBAB4) (Bacillus weihenstephanensis).